A 214-amino-acid polypeptide reads, in one-letter code: Inner membrane-spanning protein YciB (214 aa).

5 helical membrane passes run 11 to 31 (ILFFIAFKLYGIYVATAVAII), 50 to 70 (MHIITLALIVILGGATLILQD), 81 to 101 (VNWGFALVFLGSHFIGQKPII), 119 to 139 (LSYMWIAFFIFSGIANIYVAY), and 149 to 169 (FKLFGLMGLTLAFILIQGVYI).

It belongs to the YciB family.

Its subcellular location is the cell inner membrane. In terms of biological role, plays a role in cell envelope biogenesis, maintenance of cell envelope integrity and membrane homeostasis. The chain is Inner membrane-spanning protein YciB from Hydrogenovibrio crunogenus (strain DSM 25203 / XCL-2) (Thiomicrospira crunogena).